The following is a 320-amino-acid chain: Ferrochelatase (320 aa).

Residues H194 and E275 each contribute to the Fe cation site.

The protein belongs to the ferrochelatase family.

It localises to the cytoplasm. The enzyme catalyses heme b + 2 H(+) = protoporphyrin IX + Fe(2+). It functions in the pathway porphyrin-containing compound metabolism; protoheme biosynthesis; protoheme from protoporphyrin-IX: step 1/1. Functionally, catalyzes the ferrous insertion into protoporphyrin IX. In Xylella fastidiosa (strain M12), this protein is Ferrochelatase.